Consider the following 184-residue polypeptide: ATP synthase subunit b, chloroplastic (184 aa).

A helical membrane pass occupies residues 31–53 (LINLGIVISLLIYFGKGVLSNLL).

The protein belongs to the ATPase B chain family. In terms of assembly, F-type ATPases have 2 components, F(1) - the catalytic core - and F(0) - the membrane proton channel. F(1) has five subunits: alpha(3), beta(3), gamma(1), delta(1), epsilon(1). F(0) has four main subunits: a(1), b(1), b'(1) and c(10-14). The alpha and beta chains form an alternating ring which encloses part of the gamma chain. F(1) is attached to F(0) by a central stalk formed by the gamma and epsilon chains, while a peripheral stalk is formed by the delta, b and b' chains.

The protein resides in the plastid. It localises to the chloroplast thylakoid membrane. In terms of biological role, f(1)F(0) ATP synthase produces ATP from ADP in the presence of a proton or sodium gradient. F-type ATPases consist of two structural domains, F(1) containing the extramembraneous catalytic core and F(0) containing the membrane proton channel, linked together by a central stalk and a peripheral stalk. During catalysis, ATP synthesis in the catalytic domain of F(1) is coupled via a rotary mechanism of the central stalk subunits to proton translocation. Component of the F(0) channel, it forms part of the peripheral stalk, linking F(1) to F(0). The chain is ATP synthase subunit b, chloroplastic from Aneura mirabilis (Parasitic liverwort).